The primary structure comprises 456 residues: Probable hexose phosphate transport protein (456 aa).

11 helical membrane-spanning segments follow: residues isoleucine 34–phenylalanine 54, leucine 70–valine 90, isoleucine 113–tryptophan 133, valine 161–isoleucine 181, glycine 185–isoleucine 205, tyrosine 257–valine 277, leucine 302–serine 322, glycine 331–threonine 351, phenylalanine 363–alanine 383, alanine 394–glycine 414, and glycine 421–leucine 441.

The protein belongs to the major facilitator superfamily. Organophosphate:Pi antiporter (OPA) (TC 2.A.1.4) family.

It localises to the cell membrane. In terms of biological role, transport protein for sugar phosphate uptake. In Chlamydia trachomatis serovar D (strain ATCC VR-885 / DSM 19411 / UW-3/Cx), this protein is Probable hexose phosphate transport protein.